Consider the following 210-residue polypeptide: Protein-L-isoaspartate O-methyltransferase (210 aa).

Residue Ser-52 is part of the active site.

It belongs to the methyltransferase superfamily. L-isoaspartyl/D-aspartyl protein methyltransferase family.

Its subcellular location is the cytoplasm. It catalyses the reaction [protein]-L-isoaspartate + S-adenosyl-L-methionine = [protein]-L-isoaspartate alpha-methyl ester + S-adenosyl-L-homocysteine. Catalyzes the methyl esterification of L-isoaspartyl residues in peptides and proteins that result from spontaneous decomposition of normal L-aspartyl and L-asparaginyl residues. It plays a role in the repair and/or degradation of damaged proteins. In Protochlamydia amoebophila (strain UWE25), this protein is Protein-L-isoaspartate O-methyltransferase.